Here is a 209-residue protein sequence, read N- to C-terminus: Guanylate kinase (209 aa).

Positions 10-189 (GLLLVLSAPS…AFSDLRSVVV (180 aa)) constitute a Guanylate kinase-like domain. 17-24 (APSGAGKT) lines the ATP pocket.

This sequence belongs to the guanylate kinase family.

It is found in the cytoplasm. The enzyme catalyses GMP + ATP = GDP + ADP. Functionally, essential for recycling GMP and indirectly, cGMP. The chain is Guanylate kinase from Myxococcus xanthus (strain DK1622).